The sequence spans 874 residues: Leucine--tRNA ligase (874 aa).

A 'HIGH' region motif is present at residues 43 to 53 (PYPSGRIHIGH). A 'KMSKS' region motif is present at residues 630-634 (KMSKS). Lys-633 provides a ligand contact to ATP.

The protein belongs to the class-I aminoacyl-tRNA synthetase family.

Its subcellular location is the cytoplasm. The enzyme catalyses tRNA(Leu) + L-leucine + ATP = L-leucyl-tRNA(Leu) + AMP + diphosphate. The chain is Leucine--tRNA ligase from Bradyrhizobium diazoefficiens (strain JCM 10833 / BCRC 13528 / IAM 13628 / NBRC 14792 / USDA 110).